Consider the following 176-residue polypeptide: MSRIGLKVIEVPEKVTVTKNGDDITVKGPKGELTRYFDPRITFEQKDGEIHFSRSSEADKALHGTERANLASMIEGVTDGYVKKLTLVGVGYRAVAQGKKLTLNVGYSHPVVFEAPEGVTVKTPSATSIEIEGISKQVVGQFAAEIRDVRPPEPYKGKGIRYEDEYVRRKEGKTGK.

It belongs to the universal ribosomal protein uL6 family. As to quaternary structure, part of the 50S ribosomal subunit.

In terms of biological role, this protein binds to the 23S rRNA, and is important in its secondary structure. It is located near the subunit interface in the base of the L7/L12 stalk, and near the tRNA binding site of the peptidyltransferase center. This Lactobacillus gasseri (strain ATCC 33323 / DSM 20243 / BCRC 14619 / CIP 102991 / JCM 1131 / KCTC 3163 / NCIMB 11718 / NCTC 13722 / AM63) protein is Large ribosomal subunit protein uL6.